Reading from the N-terminus, the 192-residue chain is MKELFLIIGAPGSGKTTDASLIAQADATNITHYSTGDLLRAEVASGSELGKTIDSFISKGNLVPLDVVINTIVYALKAAPTKTIIIDGYPRSVEQMMEFDKVLSEQNEICLKGVIEVRVSEEVAKERVLGRNRGADDNEEVFYNRMKVYTEPLNEILDFYQKKKLHFIIDGERTIEPIVADMKELIKKIQSI.

Residue 12-17 (GSGKTT) participates in ATP binding. An NMP region spans residues 34 to 63 (STGDLLRAEVASGSELGKTIDSFISKGNLV). AMP contacts are provided by residues Thr-35, Arg-40, 61–63 (NLV), 88–91 (GYPR), and Gln-95. The interval 130–136 (GRNRGAD) is LID. Arg-131 contacts ATP. AMP is bound by residues Arg-133 and Arg-145. Arg-173 provides a ligand contact to ATP.

It belongs to the adenylate kinase family. In terms of assembly, monomer.

It localises to the cytoplasm. The catalysed reaction is AMP + ATP = 2 ADP. It participates in purine metabolism; AMP biosynthesis via salvage pathway; AMP from ADP: step 1/1. Its function is as follows. Catalyzes the reversible transfer of the terminal phosphate group between ATP and AMP. Plays an important role in cellular energy homeostasis and in adenine nucleotide metabolism. The chain is Adenylate kinase from Campylobacter jejuni subsp. jejuni serotype O:2 (strain ATCC 700819 / NCTC 11168).